The sequence spans 461 residues: uncharacterized protein (461 aa).

A compositionally biased stretch (basic and acidic residues) spans 1 to 19 (MEKCSHESGRHSAENDGKY). Positions 1–21 (MEKCSHESGRHSAENDGKYDI) are disordered.

This sequence belongs to the CapA family.

Functionally, could be involved in the biosynthesis of a cell wall component. This is an uncharacterized protein from Sinorhizobium fredii (strain NBRC 101917 / NGR234).